Reading from the N-terminus, the 100-residue chain is Co-chaperonin GroES (100 aa).

This sequence belongs to the GroES chaperonin family. In terms of assembly, heptamer of 7 subunits arranged in a ring. Interacts with the chaperonin GroEL.

It localises to the cytoplasm. Functionally, together with the chaperonin GroEL, plays an essential role in assisting protein folding. The GroEL-GroES system forms a nano-cage that allows encapsulation of the non-native substrate proteins and provides a physical environment optimized to promote and accelerate protein folding. GroES binds to the apical surface of the GroEL ring, thereby capping the opening of the GroEL channel. This chain is Co-chaperonin GroES, found in Nocardia farcinica (strain IFM 10152).